A 238-amino-acid chain; its full sequence is Heme oxygenase 1 (238 aa).

Belongs to the heme oxygenase family.

The catalysed reaction is heme b + 3 reduced [NADPH--hemoprotein reductase] + 3 O2 = biliverdin IXalpha + CO + Fe(2+) + 3 oxidized [NADPH--hemoprotein reductase] + 3 H2O + H(+). In terms of biological role, catalyzes the opening of the heme ring with the release of iron. Key enzyme in the synthesis of the chromophoric part of the photosynthetic antennae. Upon overexpression in E.coli with PCB:ferredoxin oxidoreductase, CpeS and either CpcB or PecB permits synthesis of phycocyanin-coupled CpcB or PecB. This Nostoc sp. (strain PCC 7120 / SAG 25.82 / UTEX 2576) protein is Heme oxygenase 1 (pbsA1).